The following is a 360-amino-acid chain: Phospho-N-acetylmuramoyl-pentapeptide-transferase (360 aa).

The next 10 helical transmembrane spans lie at 26–46, 73–93, 97–117, 135–155, 168–188, 199–219, 236–256, 263–283, 288–308, and 338–358; these read AILG…ILIK, TMGG…WGDL, YVLV…IDDY, ALQS…STMV, IMPQ…VGAS, GLAI…AYLS, AGEL…FLWF, VFMG…IAIL, ILLV…ILQV, and VIVR…ATLK.

This sequence belongs to the glycosyltransferase 4 family. MraY subfamily. Requires Mg(2+) as cofactor.

It is found in the cell inner membrane. The enzyme catalyses UDP-N-acetyl-alpha-D-muramoyl-L-alanyl-gamma-D-glutamyl-meso-2,6-diaminopimeloyl-D-alanyl-D-alanine + di-trans,octa-cis-undecaprenyl phosphate = di-trans,octa-cis-undecaprenyl diphospho-N-acetyl-alpha-D-muramoyl-L-alanyl-D-glutamyl-meso-2,6-diaminopimeloyl-D-alanyl-D-alanine + UMP. It participates in cell wall biogenesis; peptidoglycan biosynthesis. Catalyzes the initial step of the lipid cycle reactions in the biosynthesis of the cell wall peptidoglycan: transfers peptidoglycan precursor phospho-MurNAc-pentapeptide from UDP-MurNAc-pentapeptide onto the lipid carrier undecaprenyl phosphate, yielding undecaprenyl-pyrophosphoryl-MurNAc-pentapeptide, known as lipid I. This chain is Phospho-N-acetylmuramoyl-pentapeptide-transferase, found in Shewanella frigidimarina (strain NCIMB 400).